Reading from the N-terminus, the 151-residue chain is uncharacterized protein (151 aa).

3 4Fe-4S ferredoxin-type domains span residues 4-32 (KIIV…ESRV), 33-63 (RKVD…YLKD), and 64-93 (GIPI…IKNR). [4Fe-4S] cluster-binding residues include Cys-13, Cys-16, Cys-19, Cys-23, Cys-42, Cys-45, Cys-50, Cys-54, Cys-73, Cys-76, Cys-79, Cys-83, Cys-98, Cys-101, Cys-111, and Cys-115.

Requires [4Fe-4S] cluster as cofactor.

This is an uncharacterized protein from Methanocaldococcus jannaschii (strain ATCC 43067 / DSM 2661 / JAL-1 / JCM 10045 / NBRC 100440) (Methanococcus jannaschii).